Here is a 322-residue protein sequence, read N- to C-terminus: Pantothenate kinase (322 aa).

ATP is bound at residue glycine 100–serine 107.

It belongs to the prokaryotic pantothenate kinase family.

The protein resides in the cytoplasm. The enzyme catalyses (R)-pantothenate + ATP = (R)-4'-phosphopantothenate + ADP + H(+). It functions in the pathway cofactor biosynthesis; coenzyme A biosynthesis; CoA from (R)-pantothenate: step 1/5. This is Pantothenate kinase from Agrobacterium fabrum (strain C58 / ATCC 33970) (Agrobacterium tumefaciens (strain C58)).